Reading from the N-terminus, the 338-residue chain is Cytoskeleton protein RodZ (338 aa).

Topologically, residues 1–111 (MNTEATHEEN…LGKSRKKRDG (111 aa)) are cytoplasmic. The region spanning 19-71 (LRLAREQLGLSQQVVAERLCLKVSTVRDIEEDKAPADLASTFLRGYIRSYARL) is the HTH cro/C1-type domain. Positions 30 to 49 (QQVVAERLCLKVSTVRDIEE) form a DNA-binding region, H-T-H motif. Residues 112–132 (WLMSFTWLVLFVVVGLTGAWW) traverse the membrane as a helical; Signal-anchor for type II membrane protein segment. Residues 133 to 338 (WQNHKAQQEE…TLNAEQSVTQ (206 aa)) lie on the Periplasmic side of the membrane. Composition is skewed to polar residues over residues 147-180 (ADQS…QDQA) and 189-214 (GDTQ…SQQP). Residues 147 to 245 (ADQSSAELSQ…AQSQLPVGQA (99 aa)) are disordered. Residues 220–239 (SQANTDTAAQQNTTQPAQSQ) are compositionally biased toward low complexity.

The protein belongs to the RodZ family.

The protein resides in the cell inner membrane. In terms of biological role, cytoskeletal protein that is involved in cell-shape control through regulation of the length of the long axis. This Cronobacter sakazakii (strain ATCC BAA-894) (Enterobacter sakazakii) protein is Cytoskeleton protein RodZ.